A 545-amino-acid polypeptide reads, in one-letter code: Glucose-6-phosphate isomerase 1 (545 aa).

E356 functions as the Proton donor in the catalytic mechanism. Catalysis depends on residues H387 and K508.

Belongs to the GPI family.

It is found in the cytoplasm. It carries out the reaction alpha-D-glucose 6-phosphate = beta-D-fructose 6-phosphate. It participates in carbohydrate biosynthesis; gluconeogenesis. It functions in the pathway carbohydrate degradation; glycolysis; D-glyceraldehyde 3-phosphate and glycerone phosphate from D-glucose: step 2/4. Functionally, catalyzes the reversible isomerization of glucose-6-phosphate to fructose-6-phosphate. This chain is Glucose-6-phosphate isomerase 1, found in Cupriavidus pinatubonensis (strain JMP 134 / LMG 1197) (Cupriavidus necator (strain JMP 134)).